The primary structure comprises 512 residues: 2-isopropylmalate synthase (512 aa).

The region spanning 5-268 (LIIFDTTLRD…DLNIDTTHIV (264 aa)) is the Pyruvate carboxyltransferase domain. Mn(2+)-binding residues include Asp14, His202, His204, and Asn239. The segment at 394–512 (AFVSLSQHSE…SQAEKVAAQG (119 aa)) is regulatory domain.

It belongs to the alpha-IPM synthase/homocitrate synthase family. LeuA type 1 subfamily. Homodimer. Mn(2+) is required as a cofactor.

It is found in the cytoplasm. The catalysed reaction is 3-methyl-2-oxobutanoate + acetyl-CoA + H2O = (2S)-2-isopropylmalate + CoA + H(+). The protein operates within amino-acid biosynthesis; L-leucine biosynthesis; L-leucine from 3-methyl-2-oxobutanoate: step 1/4. Its function is as follows. Catalyzes the condensation of the acetyl group of acetyl-CoA with 3-methyl-2-oxobutanoate (2-ketoisovalerate) to form 3-carboxy-3-hydroxy-4-methylpentanoate (2-isopropylmalate). The protein is 2-isopropylmalate synthase of Variovorax paradoxus (strain S110).